The sequence spans 71 residues: Large ribosomal subunit protein bL31 (71 aa).

4 residues coordinate Zn(2+): cysteine 16, cysteine 18, cysteine 37, and cysteine 40.

Belongs to the bacterial ribosomal protein bL31 family. Type A subfamily. As to quaternary structure, part of the 50S ribosomal subunit. Requires Zn(2+) as cofactor.

Binds the 23S rRNA. In Mannheimia succiniciproducens (strain KCTC 0769BP / MBEL55E), this protein is Large ribosomal subunit protein bL31.